Here is a 107-residue protein sequence, read N- to C-terminus: Conantokin-R (107 aa).

The signal sequence occupies residues 1–24; the sequence is MQLYTYLYLLVSLVTFYLILGTGT. Residues 25–80 constitute a propeptide that is removed on maturation; the sequence is LGHGGALTERRSTDATALKPEPVLLQKSSARSTDDNGNDRLTQMKRILKKRGNKAR. The disordered stretch occupies residues 26 to 64; it reads GHGGALTERRSTDATALKPEPVLLQKSSARSTDDNGNDR. 4-carboxyglutamate is present on residues Glu-83, Glu-84, Glu-91, and Glu-95. The a divalent metal cation site is built by Glu-91 and Glu-95. A disulfide bridge connects residues Cys-101 and Cys-105.

It belongs to the conotoxin B superfamily. Requires Ca(2+) as cofactor. It depends on Mg(2+) as a cofactor. As to expression, expressed by the venom duct.

The protein resides in the secreted. In terms of biological role, conantokins inhibit N-methyl-D-aspartate (NMDA) receptors. This toxin is potent in the following order of preference: NR2B approximately NR2A/GRIN2A &gt; NR2C/GRIN2C &gt;&gt; NR2D/GRIN2D. Induces sleep-like symptoms in young mice. Is a highly potent anticonvulsant compound. The polypeptide is Conantokin-R (Conus radiatus (Rayed cone)).